The following is a 1091-amino-acid chain: MKLLYTDIRTSLTEILTREAEELVAAGKRVFYIAPNSLSFEKERAVLECLSQQASFSITVTRFAQMARYLVLNDLPAKTILDDIGLGLAFYKCLAELNPKDLRVYGAIKQDPQLIQQLIELYHEMTKSQMNFLDLENLTDEDKRADLLLIFEKVTAYLNQGQLAQGSQLSHLIEAIENDKVSSDFNQIALVIDGFTRFSAEEERVVDLLHGKGVEIVIGAYASKKAYTSPFSEGNLYQASVKFLHHLASKYQTPAQDCSQTHEKMDSFDKASRLLESSYDFSELALDVDEKDRENLQIWSCLTQKEELELVARSIRQKLHENSDLSYKHFRILLGDVASYQLSLKTIFDQYQIPFYLGRSEAMAHHPLTQFVESILALKRYRFRQEDLINLLRTDLYTDLSQSDIDAFEQYIRYLGINGLPAFQQTFTKSHHGKFNLERLNVLRLRILAPLETLFASRKQKAENLLQKWSVFLKEGAVTKQLQDLTTTLEAVEQERQAEVWKAFCHVLEQFATVFAGSQVSLEDFLALLHSGMSLSQYRTIPATVDTVLVQSYDLIAPLTADFVYAIGLTQDNLPKISQNTSLLTDEERQNLNQATEEGVQLLIASSENLKKNRYTMLSLVNSARKQLFLSAPSLFNESESKESAYLQELIHFGFRRREKRMNHKGLSKEDMGSYHSLLSSLVAYHQQGEMSDTEQDLTFVKVLSRVIGKKLDQQGLENPAIPTSPSSKTLAKDTLQALYPAKQEFYLSTSGLTEFYRNEYSYFLRYVLGLQEELRLHPDARSHGNFLHRIFERALQLPNEDSFDQRLEQAIQETSQEREFEAIYQESLEAQFTKEVLLDVARTTGHILRHNPAIETIKEEANFGGKDQAFIQLDNGRSVFVRGKVDRIDRLKANGAIGVVDYKSSLTQFQFPHFFNGLNSQLPTYLAALKREGEQNFFGAMYLEMAEPVQSLMAVKSLAGAVVEASKSMKYQGLFLEKESSYLGEFYNKNKANQLTDEEFQLLLDYNAYLYKKAAEKILAGRFAINPYTENGRSIAPYVQQHQAITGFEANYHLGQARFLEKLDLADGKRLVGEKLKQAWLEKIREELNR.

It belongs to the helicase family. AddB/RexB type 2 subfamily. In terms of assembly, heterodimer of AddA and RexB. Mg(2+) serves as cofactor.

Functionally, the heterodimer acts as both an ATP-dependent DNA helicase and an ATP-dependent, dual-direction single-stranded exonuclease. Recognizes the chi site generating a DNA molecule suitable for the initiation of homologous recombination. This subunit has 5' -&gt; 3' nuclease activity but not helicase activity. The chain is ATP-dependent helicase/deoxyribonuclease subunit B from Streptococcus pneumoniae (strain CGSP14).